The sequence spans 278 residues: Large ribosomal subunit protein uL24m (278 aa).

Positions 109–142 (FFPGDLVQVMVGKDKGRQGLVLTTSRDSSDVIVD) constitute a KOW domain.

The protein belongs to the universal ribosomal protein uL24 family.

The protein resides in the mitochondrion. The polypeptide is Large ribosomal subunit protein uL24m (mrpl-24) (Caenorhabditis elegans).